The following is a 123-amino-acid chain: MADLQKIVDDLSSLTVLEAAELAKLLEEKWGVSAAAAVAVAAAPGAAAAAVEEKTEFTVVLASAGDKKIEVIKEVRAITGLGLKEAKDLVEGAPKPIKEGVNKDEAEKLKAQLEKAGAKVELK.

It belongs to the bacterial ribosomal protein bL12 family. As to quaternary structure, homodimer. Part of the ribosomal stalk of the 50S ribosomal subunit. Forms a multimeric L10(L12)X complex, where L10 forms an elongated spine to which 2 to 4 L12 dimers bind in a sequential fashion. Binds GTP-bound translation factors.

Functionally, forms part of the ribosomal stalk which helps the ribosome interact with GTP-bound translation factors. Is thus essential for accurate translation. In Rhodopseudomonas palustris (strain BisB5), this protein is Large ribosomal subunit protein bL12.